The primary structure comprises 467 residues: Serine decarboxylase 2 (467 aa).

Histidine 178 contributes to the substrate binding site. The residue at position 290 (lysine 290) is an N6-(pyridoxal phosphate)lysine.

It belongs to the group II decarboxylase family. It depends on pyridoxal 5'-phosphate as a cofactor.

It carries out the reaction L-serine + H(+) = ethanolamine + CO2. Catalyzes the biosynthesis of ethanolamine from serine. Decarboxylation of free serine is the major source of ethanolamine production in plants and ethanolamine metabolism is crucial for the synthesis of choline, phosphatidylethanolamine (PE) and phosphatidylcholine (PC), and thus for plant growth. The chain is Serine decarboxylase 2 from Oryza sativa subsp. japonica (Rice).